The following is a 212-amino-acid chain: MLLCRLLFLECLIVIVDFYFDFLSPFSYLANHRLSKLAQDYGFSIRYYAIDLARVKIAIGNVGPSNRDLIVKLDYLKVDLQRWAELYEIPLVFPANYNSRRMNTGLYYSGAMAQTGAYVNVVFNAVWGDGIAPDLESLPALVSEKLGWDRSAFEDFISSDAATERYDEQTHAAIERKVFGVPTMFLGDEMWWGNDRLFMLENAVGGAPVNGE.

Residue S24 is the Nucleophile of the active site. S24 lines the glutathione pocket. Substrate is bound by residues K56, 66-67 (NR), and Y97. Glutathione is bound by residues V181 and 192 to 195 (WGND).

This sequence belongs to the GST superfamily. NadH family. The cofactor is glutathione.

The catalysed reaction is 2-hydroxychromene-2-carboxylate = (3E)-4-(2-hydroxyphenyl)-2-oxobut-3-enoate. The protein operates within aromatic compound metabolism; naphthalene degradation. In terms of biological role, involved in the naphthalene catabolic pathway. Catalyzes the reversible glutathione-dependent isomerization of 2-hydroxychromene-2-carboxylate (HCCA) to trans-O-hydroxybenzylidenepyruvate (THBPA). This chain is 2-hydroxychromene-2-carboxylate isomerase (doxJ), found in Pseudomonas sp. (strain C18).